Here is an 838-residue protein sequence, read N- to C-terminus: Extragenic suppressor of kinetochore protein 1 (838 aa).

Residues Ser411 and Ser418 each carry the phosphoserine modification. A disordered region spans residues 411-468 (SDEDDDDSTFSDKNSKDFKETEDMNGAEDMHGRAPQITKDNLNLTTTDSPMSEAEPVS). Thr419 carries the post-translational modification Phosphothreonine. A compositionally biased stretch (basic and acidic residues) spans 423–442 (KNSKDFKETEDMNGAEDMHG). Phosphoserine is present on residues Ser425, Ser459, Ser468, and Ser491. The span at 448 to 460 (TKDNLNLTTTDSP) shows a compositional bias: polar residues. Phosphothreonine is present on Thr493. A Phosphoserine modification is found at Ser494. A compositionally biased stretch (acidic residues) spans 690 to 700 (ELESNSSDDDV). Disordered regions lie at residues 690 to 745 (ELES…DQDN) and 757 to 838 (ISDN…NHGK). 2 positions are modified to phosphoserine: Ser711 and Ser713. Acidic residues predominate over residues 714–723 (NDEDDGNDED). The span at 724-734 (PLSREMSRRLS) shows a compositional bias: basic and acidic residues. 2 stretches are compositionally biased toward acidic residues: residues 768-779 (SDEDDDDDDEVV) and 806-818 (SDSE…DSSD).

This sequence belongs to the SAPS family. Interacts with ppe1 and mis12.

It is found in the nucleus. Functionally, has a role in chromosome segregation. May provide a dynamic connection between kinetochore microtubules and kinetochore chromatin. This Schizosaccharomyces pombe (strain 972 / ATCC 24843) (Fission yeast) protein is Extragenic suppressor of kinetochore protein 1 (ekc1).